A 584-amino-acid polypeptide reads, in one-letter code: J protein JJJ2 (584 aa).

A J domain is found at 13–77 (TYYSILGLTS…DQKLRYDRDL (65 aa)). Positions 216-312 (YSEDPNSCLG…FSSGSHDSNL (97 aa)) are disordered. S229 bears the Phosphoserine mark. Positions 241-253 (QQQQQQQQQQQQQ) are enriched in low complexity. Positions 269-282 (KDNKESKRESRVSP) are enriched in basic and acidic residues. Over residues 299 to 312 (KTSTFSSGSHDSNL) the composition is skewed to polar residues.

It localises to the cytoplasm. The protein localises to the nucleus. The protein is J protein JJJ2 (JJJ2) of Saccharomyces cerevisiae (strain YJM789) (Baker's yeast).